Consider the following 220-residue polypeptide: Cell surface glycolipoprotein MPB83 (220 aa).

A signal peptide spans 1 to 24 (MINVQAKPAAAASLAAIAIAFLAG). The N-palmitoyl cysteine moiety is linked to residue Cys-25. Cys-25 carries the S-diacylglycerol cysteine lipid modification. O-linked (Man...) threonine glycosylation is found at Thr-48 and Thr-49. Residues 83–215 (QDPVATAASN…ATVYMIDTVL (133 aa)) form the FAS1 domain.

As to quaternary structure, interacts with host (human) TLR2. O-glycosylated. Contains 0-3 mannose residues attached to residues 48-49 in various configurations; the dominant glycoform is Thr-48(Man)/Thr-49(Man2) with an unusual Man(1-&gt;3)Man linkage, but Thr48(Man3)/Thr49(Man0) through to Thr48(Man0/)Thr49(Man3) are also seen. Post-translationally, when isolated from culture filtrate runs as 25 and 23 kDa proteins; the larger protein is much less abundant, mostly associated with the cell and starts at residue 28, the shorter is more abundant and starts at residue 48.

The protein resides in the cell membrane. It is found in the secreted. It localises to the cell wall. Its function is as follows. Induces expression of human (host) matrix metalloproteinase-9 (MMP9) in a TLR1/TLR2-dependent fashion; the acylated 20 first mature residues (residues 25-40) induce the most expression, but whole recombinant protein (non-acylated and non-glycosylated), and mannosylated but not acylated protein (residues 26-220) also induce expression. In Mycobacterium bovis (strain ATCC BAA-935 / AF2122/97), this protein is Cell surface glycolipoprotein MPB83 (mpb83).